Consider the following 253-residue polypeptide: GTP cyclohydrolase III (253 aa).

The protein belongs to the archaeal-type GTP cyclohydrolase family.

It catalyses the reaction GTP + 3 H2O = 2-amino-5-formylamino-6-(5-phospho-D-ribosylamino)pyrimidin-4(3H)-one + 2 phosphate + 2 H(+). Catalyzes the formation of 2-amino-5-formylamino-6-ribofuranosylamino-4(3H)-pyrimidinone ribonucleotide monophosphate and inorganic phosphate from GTP. Also has an independent pyrophosphate phosphohydrolase activity. This Natronomonas pharaonis (strain ATCC 35678 / DSM 2160 / CIP 103997 / JCM 8858 / NBRC 14720 / NCIMB 2260 / Gabara) (Halobacterium pharaonis) protein is GTP cyclohydrolase III.